The chain runs to 644 residues: Exoribonuclease 2 (644 aa).

In terms of domain architecture, RNB spans 189 to 516 (REDLTALDFV…NHRLLKAVIK (328 aa)). Residues 561 to 643 (GTRFAAEIVD…ETRGIIARPV (83 aa)) form the S1 motif domain.

It belongs to the RNR ribonuclease family. RNase II subfamily.

Its subcellular location is the cytoplasm. It catalyses the reaction Exonucleolytic cleavage in the 3'- to 5'-direction to yield nucleoside 5'-phosphates.. Functionally, involved in mRNA degradation. Hydrolyzes single-stranded polyribonucleotides processively in the 3' to 5' direction. This Shigella sonnei (strain Ss046) protein is Exoribonuclease 2.